The following is a 116-amino-acid chain: Non-specific lipid-transfer protein (116 aa).

The first 25 residues, 1 to 25, serve as a signal peptide directing secretion; that stretch reads MAKMAMMVLCAGVTCMVVGAPYTEA. 4 disulfide bridges follow: cysteine 28-cysteine 75, cysteine 38-cysteine 52, cysteine 53-cysteine 98, and cysteine 73-cysteine 112.

It belongs to the plant LTP family.

In terms of biological role, plant non-specific lipid-transfer proteins transfer phospholipids as well as galactolipids across membranes. May play a role in wax or cutin deposition in the cell walls of expanding epidermal cells and certain secretory tissues. This Helianthus annuus (Common sunflower) protein is Non-specific lipid-transfer protein.